We begin with the raw amino-acid sequence, 200 residues long: ATP-dependent Clp protease proteolytic subunit 2 (200 aa).

S101 acts as the Nucleophile in catalysis. Residue H126 is part of the active site.

Belongs to the peptidase S14 family. In terms of assembly, fourteen ClpP subunits assemble into 2 heptameric rings which stack back to back to give a disk-like structure with a central cavity, resembling the structure of eukaryotic proteasomes.

It is found in the cytoplasm. It carries out the reaction Hydrolysis of proteins to small peptides in the presence of ATP and magnesium. alpha-casein is the usual test substrate. In the absence of ATP, only oligopeptides shorter than five residues are hydrolyzed (such as succinyl-Leu-Tyr-|-NHMec, and Leu-Tyr-Leu-|-Tyr-Trp, in which cleavage of the -Tyr-|-Leu- and -Tyr-|-Trp bonds also occurs).. Cleaves peptides in various proteins in a process that requires ATP hydrolysis. Has a chymotrypsin-like activity. Plays a major role in the degradation of misfolded proteins. The protein is ATP-dependent Clp protease proteolytic subunit 2 of Prochlorococcus marinus (strain MIT 9313).